The sequence spans 119 residues: Flagellar transcriptional regulator FlhD (119 aa).

Belongs to the FlhD family. As to quaternary structure, homodimer; disulfide-linked. Forms a heterohexamer composed of two FlhC and four FlhD subunits. Each FlhC binds a FlhD dimer, forming a heterotrimer, and a hexamer assembles by dimerization of two heterotrimers.

It is found in the cytoplasm. Its function is as follows. Functions in complex with FlhC as a master transcriptional regulator that regulates transcription of several flagellar and non-flagellar operons by binding to their promoter region. Activates expression of class 2 flagellar genes, including fliA, which is a flagellum-specific sigma factor that turns on the class 3 genes. Also regulates genes whose products function in a variety of physiological pathways. This is Flagellar transcriptional regulator FlhD from Cronobacter sakazakii (strain ATCC BAA-894) (Enterobacter sakazakii).